A 570-amino-acid polypeptide reads, in one-letter code: Protein mom-5 (570 aa).

The first 16 residues, 1–16 (MHRHILILFLFGCLSA), serve as a signal peptide directing secretion. The Extracellular segment spans residues 17–230 (DQRLSSTSIS…FDGRVRRILR (214 aa)). Positions 32 to 148 (STTRKCEHIT…FPVTDLCVGK (117 aa)) constitute an FZ domain. 5 disulfides stabilise this stretch: Cys-37-Cys-98, Cys-45-Cys-91, Cys-82-Cys-119, Cys-108-Cys-145, and Cys-112-Cys-136. N-linked (GlcNAc...) asparagine glycosylation occurs at Asn-51. The N-linked (GlcNAc...) asparagine glycan is linked to Asn-149. The chain crosses the membrane as a helical span at residues 231 to 251 (IWTAAWSVACFVCSLFTLVTF). Topologically, residues 252–264 (LVDLSRFAYPVRP) are cytoplasmic. Residues 265–285 (ILYLAFCYLAISTVYMIGVVG) traverse the membrane as a helical segment. Residues 286 to 319 (EDGFACGTYGSTPTTLVTQGGENVGCSALAVVHY) are Extracellular-facing. A helical membrane pass occupies residues 320-340 (FFFMSSCAWWLVLCLAWFLAA). The Cytoplasmic segment spans residues 341-348 (NLKWGAES). The helical transmembrane segment at 349–369 (IAALSPYFHAMCWGVPAVLSV) threads the bilayer. The Extracellular portion of the chain corresponds to 370 to 395 (TVLVTNSVDGDVFTGICSVGNLNPSA). The chain crosses the membrane as a helical span at residues 396 to 416 (LVYFFFTPIVVSLALGAVLLV). Over 417–449 (CGIWSMIRIRSYIKLQHADVERNISKLEKLMLR) the chain is Cytoplasmic. Residues 450–470 (IGAFAIMYSLPTAMNAAIMWY) form a helical membrane-spanning segment. Residues 471 to 515 (QAVNMPAWLEGWLHHRCVRLQDRELFGFTYPVDDCPMDPKVAAPE) are Extracellular-facing. Residues 516-536 (IIVFLLKYVSQLVVGITCAIW) traverse the membrane as a helical segment. The Cytoplasmic segment spans residues 537–570 (VVSSKTLSSYHKAYLALSSRSPTVPAHVDQVNMR).

It belongs to the G-protein coupled receptor Fz/Smo family.

The protein resides in the cell membrane. Its subcellular location is the early endosome. Its function is as follows. Receptor for Wnt proteins. Most frizzled receptors are coupled to the beta-catenin canonical signaling pathway, which leads to the activation of disheveled proteins, inhibition of gsk-3 kinase, nuclear accumulation of beta-catenin and activation of Wnt target genes. A second signaling pathway involving PKC and calcium fluxes has been seen for some family members, but it is not yet clear if it represents a distinct pathway or if it can be integrated in the canonical pathway, as pkc seems to be required for Wnt-mediated inactivation of gsk-3 kinase. Both pathways seem to involve interactions with G-proteins. Required in embryonic development for the correct positioning and orientation of the mitotic spindles and division planes in blastomere cells. During early embryonic cell divisions, directs the asymmetric positioning of transcription factors such as pop-1 and dsh-2 in daughter cells in order to determine cell fate specification. Acts redundantly with other Wnt receptors such as lin-17 to control vulval precursor cell specification and also the polarity of different cell types including distal tip cells, seam cells, AVG interneurons and P-cells and their descendants. Plays a role in the migration of cell types including distal tip cells and the QR neuroblast descendants, QR.p and QR.pa during larval development. Negatively regulates the unc-6/Netrin receptors unc-5 and unc-40 to control distal tip cell polarity and migration. Acts through ced-5/DOCK180 and ced-10/Rac to control both distal tip cell migration and the phagocytic clearance of apoptotic cell corpses. Furthermore, it is also required for the migration and axon guidance of the different neuronal cell types including CAN, ALM, HSN and the two mechanosensory neurons AVM and PVM. Mediates Wnt receptor cfz-2 in directing ALM migration, but may also act redundantly with the Wnt receptors cfz-2 and mig-1 to direct the migration of other neuronal cell types including CAN and HSN. Mediates Wnt ligand egl-20 in the control of the anterior-posterior axon guidance of AVM and PVM neurons. The polypeptide is Protein mom-5 (Caenorhabditis elegans).